A 191-amino-acid chain; its full sequence is Protein GrpE (191 aa).

It belongs to the GrpE family. In terms of assembly, homodimer.

The protein resides in the cytoplasm. In terms of biological role, participates actively in the response to hyperosmotic and heat shock by preventing the aggregation of stress-denatured proteins, in association with DnaK and GrpE. It is the nucleotide exchange factor for DnaK and may function as a thermosensor. Unfolded proteins bind initially to DnaJ; upon interaction with the DnaJ-bound protein, DnaK hydrolyzes its bound ATP, resulting in the formation of a stable complex. GrpE releases ADP from DnaK; ATP binding to DnaK triggers the release of the substrate protein, thus completing the reaction cycle. Several rounds of ATP-dependent interactions between DnaJ, DnaK and GrpE are required for fully efficient folding. The protein is Protein GrpE of Nitratidesulfovibrio vulgaris (strain ATCC 29579 / DSM 644 / CCUG 34227 / NCIMB 8303 / VKM B-1760 / Hildenborough) (Desulfovibrio vulgaris).